The sequence spans 943 residues: Glycine dehydrogenase (decarboxylating) (943 aa).

At lysine 695 the chain carries N6-(pyridoxal phosphate)lysine.

It belongs to the GcvP family. As to quaternary structure, the glycine cleavage system is composed of four proteins: P, T, L and H. Requires pyridoxal 5'-phosphate as cofactor.

The catalysed reaction is N(6)-[(R)-lipoyl]-L-lysyl-[glycine-cleavage complex H protein] + glycine + H(+) = N(6)-[(R)-S(8)-aminomethyldihydrolipoyl]-L-lysyl-[glycine-cleavage complex H protein] + CO2. Its function is as follows. The glycine cleavage system catalyzes the degradation of glycine. The P protein binds the alpha-amino group of glycine through its pyridoxal phosphate cofactor; CO(2) is released and the remaining methylamine moiety is then transferred to the lipoamide cofactor of the H protein. In Jannaschia sp. (strain CCS1), this protein is Glycine dehydrogenase (decarboxylating).